The primary structure comprises 91 residues: DNA-directed RNA polymerase subunit omega (91 aa).

Belongs to the RNA polymerase subunit omega family. In terms of assembly, the RNAP catalytic core consists of 2 alpha, 1 beta, 1 beta' and 1 omega subunit. When a sigma factor is associated with the core the holoenzyme is formed, which can initiate transcription.

It catalyses the reaction RNA(n) + a ribonucleoside 5'-triphosphate = RNA(n+1) + diphosphate. In terms of biological role, promotes RNA polymerase assembly. Latches the N- and C-terminal regions of the beta' subunit thereby facilitating its interaction with the beta and alpha subunits. This is DNA-directed RNA polymerase subunit omega from Syntrophus aciditrophicus (strain SB).